A 431-amino-acid polypeptide reads, in one-letter code: Gamma conglutin 1 (431 aa).

An N-terminal signal peptide occupies residues 1–24 (MASFLHNFLLFFCSLSLIILTSSA). Residues 51-407 (HVVQIHKRTP…DLMNSRLGFS (357 aa)) form the Peptidase A1 domain. 5 cysteine pairs are disulfide-bonded: cysteine 79–cysteine 168, cysteine 93–cysteine 106, cysteine 98–cysteine 123, cysteine 109–cysteine 118, and cysteine 322–cysteine 369.

Belongs to the peptidase A1 family. As to quaternary structure, two-subunit monomeric unit made of alpha and beta subunits coupled by disulfide bonds (at pH 4.5 and under non-reducing conditions). Monomeric alpha and beta subunits in reducing conditions. Can also form oligomers including dimer, tetramer and cyclic hexamer (trimer of dimers) (at pH &gt; 5.5). Component of globulins complexes which accumulate in seeds. Interacts with flavonoids (e.g. apigenin glucosides) present in globulins complexes.

The protein resides in the secreted. It localises to the extracellular space. Its function is as follows. Sulfur-rich seed storage protein that remains undegraded at germination. This chain is Gamma conglutin 1, found in Prunus dulcis (Almond).